We begin with the raw amino-acid sequence, 204 residues long: Histone chaperone ASF1A (204 aa).

Residues 1-156 form an interaction with histone H3, CHAF1B, and HIRA region; it reads MAKVQVNNVV…TRFHINWEDN (156 aa). A Required for interaction with HIRA motif is present at residues 31–37; sequence IEDLSED. Residues 155–204 are required for interaction with HIRA; that stretch reads DNTEKLEDAESSNPNLPSLLSTDALPSASKGWSTSENSLNVMLESHMDCM. S192 carries the phosphoserine; by TLK2 modification.

The protein belongs to the ASF1 family. As to quaternary structure, interacts with histone H3 (via C-terminus), including histone H3.1, H3.2 and H3.3, and histone H4; the interaction with H3 is direct. Probably interacts with the heterodimeric form of H3-H4 taking the place of the second dimer. Interacts with the CHAF1A, CHAF1B and RBBP4 subunits of the CAF-1 complex. Interacts with CABIN1, HAT1, HIRA, NASP, TAF1 and UBN1. Found in a soluble complex with NASP and histones H3 and H4; the interaction with NASP is probably indirect and mediated by H3-H4. Interacts with CDAN1. Found in a cytosolic complex with IPO4 and histones H3 and H4. Interacts with CREBBP. Phosphorylated by TLK1 and TLK2. Highly phosphorylated in S-phase and at lower levels in M-phase. TLK2-mediated phosphorylation at Ser-192 prevents proteasome-dependent degradation.

Its subcellular location is the nucleus. In terms of biological role, histone chaperone that facilitates histone deposition and histone exchange and removal during nucleosome assembly and disassembly. Cooperates with chromatin assembly factor 1 (CAF-1) to promote replication-dependent chromatin assembly and with HIRA to promote replication-independent chromatin assembly. Promotes homologous recombination-mediated repair of double-strand breaks (DSBs) at stalled or collapsed replication forks: acts by mediating histone replacement at DSBs, leading to recruitment of the MMS22L-TONSL complex and subsequent loading of RAD51. Also involved in the nuclear import of the histone H3-H4 dimer together with importin-4 (IPO4): specifically recognizes and binds newly synthesized histones with the monomethylation of H3 'Lys-9' and acetylation at 'Lys-14' (H3K9me1K14ac) marks, and diacetylation at 'Lys-5' and 'Lys-12' of H4 (H4K5K12ac) marks in the cytosol. Required for the formation of senescence-associated heterochromatin foci (SAHF) and efficient senescence-associated cell cycle exit. The chain is Histone chaperone ASF1A (ASF1A) from Bos taurus (Bovine).